A 422-amino-acid polypeptide reads, in one-letter code: Ribosomal RNA small subunit methyltransferase B (422 aa).

S-adenosyl-L-methionine is bound by residues 254 to 260 (CAAPGGK), D277, D303, and D322. Residue C375 is the Nucleophile of the active site.

It belongs to the class I-like SAM-binding methyltransferase superfamily. RsmB/NOP family.

The protein localises to the cytoplasm. It carries out the reaction cytidine(967) in 16S rRNA + S-adenosyl-L-methionine = 5-methylcytidine(967) in 16S rRNA + S-adenosyl-L-homocysteine + H(+). In terms of biological role, specifically methylates the cytosine at position 967 (m5C967) of 16S rRNA. The chain is Ribosomal RNA small subunit methyltransferase B from Proteus mirabilis (strain HI4320).